We begin with the raw amino-acid sequence, 733 residues long: Photosystem I P700 chlorophyll a apoprotein A2 (733 aa).

Helical transmembrane passes span I46–A69, L134–Q157, L174–I198, I272–Y290, L329–Y352, A368–V394, A416–H438, and F516–V534. Residues C558 and C567 each coordinate [4Fe-4S] cluster. The next 2 helical transmembrane spans lie at A574–W595 and L642–I664. Chlorophyll a is bound by residues H653, M661, and Y669. W670 serves as a coordination point for phylloquinone. The chain crosses the membrane as a helical span at residues L706–A726.

It belongs to the PsaA/PsaB family. In terms of assembly, the PsaA/B heterodimer binds the P700 chlorophyll special pair and subsequent electron acceptors. PSI consists of a core antenna complex that captures photons, and an electron transfer chain that converts photonic excitation into a charge separation. The eukaryotic PSI reaction center is composed of at least 11 subunits. Requires P700 is a chlorophyll a/chlorophyll a' dimer, A0 is one or more chlorophyll a, A1 is one or both phylloquinones and FX is a shared 4Fe-4S iron-sulfur center. as cofactor.

It is found in the plastid. The protein localises to the chloroplast thylakoid membrane. The catalysed reaction is reduced [plastocyanin] + hnu + oxidized [2Fe-2S]-[ferredoxin] = oxidized [plastocyanin] + reduced [2Fe-2S]-[ferredoxin]. Its function is as follows. PsaA and PsaB bind P700, the primary electron donor of photosystem I (PSI), as well as the electron acceptors A0, A1 and FX. PSI is a plastocyanin/cytochrome c6-ferredoxin oxidoreductase, converting photonic excitation into a charge separation, which transfers an electron from the donor P700 chlorophyll pair to the spectroscopically characterized acceptors A0, A1, FX, FA and FB in turn. Oxidized P700 is reduced on the lumenal side of the thylakoid membrane by plastocyanin or cytochrome c6. This is Photosystem I P700 chlorophyll a apoprotein A2 from Phaeodactylum tricornutum (strain CCAP 1055/1).